A 751-amino-acid polypeptide reads, in one-letter code: Semaphorin-3C (751 aa).

The first 20 residues, 1–20 (MAFRAICVLVGVFICSICVR), serve as a signal peptide directing secretion. The 484-residue stretch at 28–511 (RVYLTFDELR…SNEGVSQVSL (484 aa)) folds into the Sema domain. Asparagine 81 is a glycosylation site (N-linked (GlcNAc...) asparagine). A disulfide bridge connects residues cysteine 101 and cysteine 112. Residue asparagine 123 is glycosylated (N-linked (GlcNAc...) asparagine). Cysteine 130 and cysteine 139 form a disulfide bridge. Residues asparagine 252 and asparagine 268 are each glycosylated (N-linked (GlcNAc...) asparagine). Disulfide bonds link cysteine 266–cysteine 378 and cysteine 290–cysteine 338. Asparagine 465 carries an N-linked (GlcNAc...) asparagine glycan. A disulfide bond links cysteine 514 and cysteine 532. The region spanning 571 to 655 (AYRNAAEIVQ…TENSFKQTIA (85 aa)) is the Ig-like C2-type domain. 2 N-linked (GlcNAc...) asparagine glycosylation sites follow: asparagine 585 and asparagine 586. Cysteine 643 and cysteine 709 are disulfide-bonded.

Belongs to the semaphorin family. In terms of assembly, interacts with PLXND1.

Its subcellular location is the secreted. Binds to plexin family members and plays an important role in the regulation of developmental processes. Required for normal cardiovascular development during embryogenesis. Functions as attractant for growing axons, and thereby plays an important role in axon growth and axon guidance. The protein is Semaphorin-3C (Sema3c) of Mus musculus (Mouse).